Reading from the N-terminus, the 142-residue chain is Large ribosomal subunit protein uL22c (142 aa).

This sequence belongs to the universal ribosomal protein uL22 family. As to quaternary structure, part of the 50S ribosomal subunit.

Its subcellular location is the plastid. The protein resides in the chloroplast. In terms of biological role, this protein binds specifically to 23S rRNA. Its function is as follows. The globular domain of the protein is located near the polypeptide exit tunnel on the outside of the subunit, while an extended beta-hairpin is found that lines the wall of the exit tunnel in the center of the 70S ribosome. This chain is Large ribosomal subunit protein uL22c (rpl22), found in Picea abies (Norway spruce).